A 474-amino-acid chain; its full sequence is Trigger factor (474 aa).

The region spanning 171–258 (GDVAVIDFQG…LKELKTRDLP (88 aa)) is the PPIase FKBP-type domain. Residues 441 to 474 (TEVDAASATVETTATETAEEAPEAPKAKKGKKKA) form a disordered region. A compositionally biased stretch (low complexity) spans 444-456 (DAASATVETTATE).

The protein belongs to the FKBP-type PPIase family. Tig subfamily.

It is found in the cytoplasm. It catalyses the reaction [protein]-peptidylproline (omega=180) = [protein]-peptidylproline (omega=0). In terms of biological role, involved in protein export. Acts as a chaperone by maintaining the newly synthesized protein in an open conformation. Functions as a peptidyl-prolyl cis-trans isomerase. The chain is Trigger factor from Synechococcus sp. (strain ATCC 27144 / PCC 6301 / SAUG 1402/1) (Anacystis nidulans).